Here is a 181-residue protein sequence, read N- to C-terminus: Mating-type M-specific polypeptide Mc (181 aa).

The segment at residues 103-171 (TPRPPNAFIL…QHQKMYPGYK (69 aa)) is a DNA-binding region (HMG box).

The protein resides in the nucleus. Functionally, mating type proteins are sequence specific DNA-binding proteins that act as master switches in yeast differentiation by controlling gene expression in a cell type-specific fashion. Positive regulator of MFM genes. The HMG box recognizes the DNA sequence 5'-AACAAAG-3'. Required for conjugation and efficient meiosis. This is Mating-type M-specific polypeptide Mc (matMc) from Schizosaccharomyces kambucha (Fission yeast).